The chain runs to 183 residues: Phosphopantetheine adenylyltransferase (183 aa).

Position 13 (threonine 13) interacts with substrate. ATP-binding positions include 13 to 14 (TF) and histidine 21. Substrate is bound by residues lysine 45, leucine 81, and arginine 95. ATP-binding positions include 96–98 (GLR), glutamate 106, and 131–137 (HQFISSR).

The protein belongs to the bacterial CoaD family. In terms of assembly, homohexamer. Requires Mg(2+) as cofactor.

Its subcellular location is the cytoplasm. It carries out the reaction (R)-4'-phosphopantetheine + ATP + H(+) = 3'-dephospho-CoA + diphosphate. It functions in the pathway cofactor biosynthesis; coenzyme A biosynthesis; CoA from (R)-pantothenate: step 4/5. Functionally, reversibly transfers an adenylyl group from ATP to 4'-phosphopantetheine, yielding dephospho-CoA (dPCoA) and pyrophosphate. This Rhodospirillum centenum (strain ATCC 51521 / SW) protein is Phosphopantetheine adenylyltransferase.